A 508-amino-acid polypeptide reads, in one-letter code: Vacuolar serine-type carboxypeptidase ATG42 (508 aa).

Positions 1-24 are cleaved as a signal peptide; that stretch reads MKYLNLVFVLQLLISIKYASFGRA. 5 cysteine pairs are disulfide-bonded: Cys132-Cys375, Cys267-Cys281, Cys291-Cys314, Cys298-Cys307, and Cys336-Cys345. Residue Asn163 is glycosylated (N-linked (GlcNAc...) asparagine). Residue Ser219 is part of the active site. An N-linked (GlcNAc...) asparagine glycan is attached at Asn242. Residues Asn339 and Asn371 are each glycosylated (N-linked (GlcNAc...) asparagine). Asp415 is a catalytic residue. Residue Cys418 coordinates substrate. His474 is an active-site residue. Met475 contacts substrate.

The protein belongs to the peptidase S10 family.

It localises to the vacuole lumen. It carries out the reaction Release of a C-terminal amino acid with broad specificity.. Vacuolar serine-type carboxypeptidase involved in vacuolar zymogen activation, breakdown of the autophagic body, and autophagosome-dependent protein synthesis. Plays a key role in phytochelatin (PC) synthesis from glutathione (GSH) by cleaving the Gly from GSH and form the PC-peptides of the structure (gamma-Glu-Cys)2-Gly. Also involved in resistance to xenobiotics via the degradation of glutathione-S-conjugates. In Saccharomyces cerevisiae (strain ATCC 204508 / S288c) (Baker's yeast), this protein is Vacuolar serine-type carboxypeptidase ATG42.